Here is a 233-residue protein sequence, read N- to C-terminus: Ribonuclease 3 (233 aa).

The 123-residue stretch at 4-126 (LNKLMERLGH…IVGAIYIDAG (123 aa)) folds into the RNase III domain. Position 39 (Glu39) interacts with Mg(2+). Residue Asp43 is part of the active site. Positions 112 and 115 each coordinate Mg(2+). The active site involves Glu115. Positions 153 to 222 (DAKSLLQEWL…AKRFLELLDD (70 aa)) constitute a DRBM domain.

This sequence belongs to the ribonuclease III family. Homodimer. Mg(2+) serves as cofactor.

It is found in the cytoplasm. It carries out the reaction Endonucleolytic cleavage to 5'-phosphomonoester.. Functionally, digests double-stranded RNA. Involved in the processing of primary rRNA transcript to yield the immediate precursors to the large and small rRNAs (23S and 16S). Processes some mRNAs, and tRNAs when they are encoded in the rRNA operon. Processes pre-crRNA and tracrRNA of type II CRISPR loci if present in the organism. The polypeptide is Ribonuclease 3 (Coxiella burnetii (strain Dugway 5J108-111)).